The chain runs to 422 residues: Dihydrolipoyllysine-residue succinyltransferase component of 2-oxoglutarate dehydrogenase complex (422 aa).

The 76-residue stretch at M1–G76 folds into the Lipoyl-binding domain. The residue at position 42 (K42) is an N6-lipoyllysine. Positions E77–Q185 are disordered. 2 stretches are compositionally biased toward polar residues: residues G80 to Q94 and N116 to P130. In terms of domain architecture, Peripheral subunit-binding (PSBD) spans N127 to Q163. Basic and acidic residues predominate over residues D152 to Q163. The segment covering Q164–S176 has biased composition (low complexity). Catalysis depends on residues H393 and D397.

Belongs to the 2-oxoacid dehydrogenase family. In terms of assembly, forms a 24-polypeptide structural core with octahedral symmetry. Part of the 2-oxoglutarate dehydrogenase (OGDH) complex composed of E1 (2-oxoglutarate dehydrogenase), E2 (dihydrolipoamide succinyltransferase) and E3 (dihydrolipoamide dehydrogenase); the complex contains multiple copies of the three enzymatic components (E1, E2 and E3). (R)-lipoate serves as cofactor.

The enzyme catalyses N(6)-[(R)-dihydrolipoyl]-L-lysyl-[protein] + succinyl-CoA = N(6)-[(R)-S(8)-succinyldihydrolipoyl]-L-lysyl-[protein] + CoA. It functions in the pathway amino-acid degradation; L-lysine degradation via saccharopine pathway; glutaryl-CoA from L-lysine: step 6/6. Its function is as follows. E2 component of the 2-oxoglutarate dehydrogenase (OGDH) complex which catalyzes the second step in the conversion of 2-oxoglutarate to succinyl-CoA and CO(2). This Staphylococcus aureus (strain USA300) protein is Dihydrolipoyllysine-residue succinyltransferase component of 2-oxoglutarate dehydrogenase complex (odhB).